Here is a 503-residue protein sequence, read N- to C-terminus: Aminoaldehyde dehydrogenase 2, peroxisomal (503 aa).

Residues isoleucine 28 and aspartate 99 each coordinate Na(+). Residues tryptophan 161 and lysine 185 each coordinate NAD(+). Leucine 189 contributes to the Na(+) binding site. An NAD(+)-binding site is contributed by serine 239. Glutamate 260 (proton acceptor) is an active-site residue. Residue cysteine 294 is the Nucleophile of the active site. Residues 501-503 (AKL) carry the Microbody targeting signal motif.

The protein belongs to the aldehyde dehydrogenase family. In terms of assembly, forms homodimers.

Its subcellular location is the peroxisome. It catalyses the reaction 3-aminopropanal + NAD(+) + H2O = beta-alanine + NADH + 2 H(+). The catalysed reaction is 4-aminobutanal + NAD(+) + H2O = 4-aminobutanoate + NADH + 2 H(+). The enzyme catalyses 4-guanidinobutanal + NAD(+) + H2O = 4-guanidinobutanoate + NADH + 2 H(+). The protein operates within amine and polyamine biosynthesis; betaine biosynthesis via choline pathway; betaine from betaine aldehyde: step 1/1. Dehydrogenase that catalyzes the oxidation of several aminoaldehydes. Metabolizes and detoxifies aldehyde products of polyamine degradation to non-toxic amino acids. Catalyzes the oxidation of 3-aminopropanal to beta-alanine. Catalyzes the oxidation of 4-aminobutanal to 4-aminobutanoate. Catalyzes the oxidation of 4-guanidinobutanal to 4-guanidinobutanoate. The protein is Aminoaldehyde dehydrogenase 2, peroxisomal of Pisum sativum (Garden pea).